A 382-amino-acid chain; its full sequence is ATP phosphoribosyltransferase regulatory subunit (382 aa).

Belongs to the class-II aminoacyl-tRNA synthetase family. HisZ subfamily. Heteromultimer composed of HisG and HisZ subunits.

It localises to the cytoplasm. The protein operates within amino-acid biosynthesis; L-histidine biosynthesis; L-histidine from 5-phospho-alpha-D-ribose 1-diphosphate: step 1/9. In terms of biological role, required for the first step of histidine biosynthesis. May allow the feedback regulation of ATP phosphoribosyltransferase activity by histidine. This chain is ATP phosphoribosyltransferase regulatory subunit, found in Lacticaseibacillus casei (strain BL23) (Lactobacillus casei).